A 1364-amino-acid polypeptide reads, in one-letter code: MNKVFSLKYSFLAKGFIAVSELARRVSVKGKLKSASSIIISPITIAIVSYAPPSLAATVNADISYQTFRDFAENKGAFIVGASNINIYDKNGVLVGVLDKAPMPDFSSATMNTGTLPPGDHTLYSPQYVVTAKHVNGSDIMSFGHIQNNYTVVGENNHNSLDIKIRRLNKIVTEVAPAEISSVGAVNGAYQEGGRFKAFYRLGGGLQYIKDKNGNLTPVYTNGGFLTGGTISALSSYNNGQMITAPTGDIFNPANGPLANYLNKGDSGSPLFAYDSLDKKWVLVGVLSSGSEHGNNWVVTTQDFLHQQPKHDFDKTISYDSEKGSLQWRYNKNSGVGTLSQESVVWDMHGKKGGDLNAGKNLQFTGNNGEIILHDSIDQGAGYLQFFDNYTVTSLTDQTWTGGGIITEKGVNVLWQVNGVNDDNLHKVGEGTLTVNGKGVNNGGLKVGDGTVILNQRPDDNGHKQAFSSINISSGRATVILSDANQVNPDKISWGYRGGTLDLNGNNVNFTRLQAADYGAIVSNNNKNKSELTLKLQTLNENDISVDVKTYEVFGGHGSPGDLYYVPASNTYFILKSKAYGPFFSDLDNTNVWQNVGHDRDKAIQIVKQQKIGESSQPYMFHGQLNGYMDVNIHPLSGKDVLTLDGSVNLPEGVITKKSGTLIFQGHPVIHAGMTTSAGQSDWENRQFTMDKLRLDAATFHLSRNAHMQGDISAANGSTVILGSSRVFTDKNDGTGNAVSSVEGSSIATTAGDQSYYSGNVLLENHSSLEVRENFTGGIEAYDSSVSVTSQNAIFDHVGSFVNSSLLLEKGAKLTAQSGIFTNNTMKIKENASLTLTGIPSVGKPGYYSPVTSTTEGIHLGERASLSVKNMGYLSSNITAENSAAIINLGDSNATIGKTDSPLFSTLMRGYNAVLQGNIMGPQSSVNMNNALWHSDRNSELKELKANDSQIELGVRGHFAKLRVKELIASNSVFLVHANNSQADQLNVTDKLQGSNNTILVDFFNKAANGTNVTLITAPKGSDENTFKAGTQQIGFSNITPEIRTENTDTATQWVLTGYQSVADARASKIATDFMDSGYKSFLTEVNNLNKRMGDLRDSQGDAGGWARIMNGTGSGESGYRDNYTHVQIGADRKHELNGIDLFTGALLTYTDNNASSQAFSGKTKSLGGGVYASGLFESGAYFDLIGKYLHHDNRYTLNFASLGERSYTSHSLYAGAEIGYRYHMSENTWVEPQMELVYGSVSGKSFNWKDQGMQLSMKDKDYHPLIGRTGVDVGRAFSGDTWKVTVRAGLGYQFDLLANGETVLQDASGKKHFKGEKDSRMLMNVGTNVEVKDNMRFGLELEKSAFGRYNIDNSINANFRYYF.

Positions 1–56 (MNKVFSLKYSFLAKGFIAVSELARRVSVKGKLKSASSIIISPITIAIVSYAPPSLA) are cleaved as a signal peptide. The region spanning 57-307 (ATVNADISYQ…VVTTQDFLHQ (251 aa)) is the Peptidase S6 domain. Residues His134, Asp162, and Ser267 each act as charge relay system in the active site. In terms of domain architecture, Autotransporter spans 1098 to 1364 (DSQGDAGGWA…SINANFRYYF (267 aa)).

Cleaved to release the mature protein from the outer membrane.

It localises to the periplasm. Its subcellular location is the secreted. The protein localises to the cell surface. The protein resides in the cell outer membrane. Its activity is regulated as follows. Inhibited by phenylmethylsulfonyl fluoride. In terms of biological role, autotransporter serine protease probably involved in virulence. The polypeptide is Serine protease EatA (eatA) (Escherichia coli O78:H11 (strain H10407 / ETEC)).